The primary structure comprises 1149 residues: MFQTKLRNETWEDLPKMSCTTEIQAAFILSSFVTFFSGLIILLIFRLIWRSVKKWQIIKGTGIILELFTSGTIARSHVRSLHFQGQFRDHIEMLLSAQTFVGQVLVILVFVLSIGSLIIYFINSADPVGSCSSYEDKTIPIDLVFNAFFSFYFGLRFMAADDKIKFWLEMNSIVDIFTIPPTFISYYLKSNWLGLRFLRALRLLELPQILQILRAIKTSNSVKFSKLLSIILSTWFTAAGFIHLVENSGDPWLKGRNSQNISYFESIYLVMATTSTVGFGDVVAKTSLGRTFIMFFTLGSLILFANYIPEMVELFANKRKYTSSYEALKGKKFIVVCGNITVDSVTAFLRNFLRDKSGEINTEIVFLGETPPSLELETIFKCYLAYTTFISGSAMKWEDLRRVAVESAEACLIIANPLCSDSHAEDISNIMRVLSIKNYDSTTRIIIQILQSHNKVYLPKIPSWNWDTGDNIICFAELKLGFIAQGCLVPGLCTFLTSLFVEQNKKVMPKQTWKKHFLNSMKNKILTQRLSDDFAGMSFPEVARLCFLKMHLLLIAIEYKSLFTDGFCGLILNPPPQVRIRKNTLGFFIAETPKDVRRALFYCSVCHDDVFIPELITNCGCKSRSRQHITVPSVKRMKKCLKGISSRISGQDSPPRVSASTSSISNFTTRTLQHDVEQDSDQLDSSGMFHWCKPTSLDKVTLKRTGKSKYKFRNHIVACVFGDAHSAPMGLRNFVMPLRASNYTRKELKDIVFIGSLDYLQREWRFLWNFPQIYILPGCALYSGDLHAANIEQCSMCAVLSPPPQPSSNQTLVDTEAIMATLTIGSLQIDSSSDPSPSVSEETPGYTNGHNEKSNCRKVPILTELKNPSNIHFIEQLGGLEGSLQETNLHLSTAFSTGTVFSGSFLDSLLATAFYNYHVLELLQMLVTGGVSSQLEQHLDKDKVYGVADSCTSLLSGRNRCKLGLLSLHETILSDVNPRNTFGQLFCGSLDLFGILCVGLYRIIDEEELNPENKRFVITRPANEFKLLPSDLVFCAIPFSTACYKRNEEFSLQKSYEIVNKASQTTETHSDTNCPPTIDSVTETLYSPVYSYQPRTNSLSFPKQIAWNQSRTNSIISSQIPLGDNAKENERKTSDEVYDEDPFAYSEPL.

Topologically, residues 1 to 24 are extracellular; sequence MFQTKLRNETWEDLPKMSCTTEIQ. Residues 25-45 form a helical membrane-spanning segment; it reads AAFILSSFVTFFSGLIILLIF. The Cytoplasmic portion of the chain corresponds to 46–101; sequence RLIWRSVKKWQIIKGTGIILELFTSGTIARSHVRSLHFQGQFRDHIEMLLSAQTFV. The chain crosses the membrane as a helical span at residues 102–122; that stretch reads GQVLVILVFVLSIGSLIIYFI. Residues 123 to 138 lie on the Extracellular side of the membrane; that stretch reads NSADPVGSCSSYEDKT. A helical membrane pass occupies residues 139-159; the sequence is IPIDLVFNAFFSFYFGLRFMA. The Cytoplasmic portion of the chain corresponds to 160–163; it reads ADDK. Residues 164–184 traverse the membrane as a helical segment; it reads IKFWLEMNSIVDIFTIPPTFI. Residues 185-188 are Extracellular-facing; the sequence is SYYL. Residues 189–209 traverse the membrane as a helical; Voltage-sensor segment; the sequence is KSNWLGLRFLRALRLLELPQI. The Cytoplasmic segment spans residues 210–226; sequence LQILRAIKTSNSVKFSK. Residues 227–247 traverse the membrane as a helical segment; that stretch reads LLSIILSTWFTAAGFIHLVEN. The Extracellular portion of the chain corresponds to 248 to 259; the sequence is SGDPWLKGRNSQ. Residues 260–282 constitute an intramembrane region (pore-forming); that stretch reads NISYFESIYLVMATTSTVGFGDV. The Selectivity for potassium signature appears at 276 to 279; it reads TVGF. At 283–291 the chain is on the extracellular side; sequence VAKTSLGRT. A helical transmembrane segment spans residues 292–312; that stretch reads FIMFFTLGSLILFANYIPEMV. Over 313 to 1149 the chain is Cytoplasmic; the sequence is ELFANKRKYT…EDPFAYSEPL (837 aa). RCK N-terminal domains lie at 331–473 and 713–884; these read KKFI…DNII and RNHI…EGSL. Disordered regions lie at residues 828-854 and 1118-1149; these read QIDS…NEKS and SQIP…SEPL. A compositionally biased stretch (low complexity) spans 830 to 840; it reads DSSSDPSPSVS. Basic and acidic residues predominate over residues 1125 to 1135; the sequence is NAKENERKTSD.

This sequence belongs to the potassium channel family. Calcium-activated (TC 1.A.1.3) subfamily. KCa5.1/KCNU1 sub-subfamily. In terms of assembly, homotetramer; which constitutes the activated potassium channel. Interacts with LRRC52; this interaction changes channel gating properties, such as shifting gating to more negative potentials at a given pH. As to expression, testis-specific.

It is found in the cell membrane. It localises to the cell projection. The protein localises to the cilium. Its subcellular location is the flagellum membrane. The catalysed reaction is K(+)(in) = K(+)(out). Regulated by changes in cytosolic pH; activated by alkalization. Activated by intracellular Ca(2+). Despite strong sequence similarity, human KCNU1 channels are significantly more sensitive to activation by internal Ca(2+) and less pH-sensitive than mouse KCNU1. VU0546110 acts as a selective inhibitor. The auxiliary subunit LRRC52 shifts the activation of KCNU1 to more negative potentials at a given pH. Testis-specific potassium channel activated by both intracellular pH and membrane voltage that mediates export of K(+). Represents the primary spermatozoan K(+) current. The channel underlies a pH-triggered membrane hyperpolarization during the process of sperm capacitation, as sperm encounter the alkaline environment near the ovum in the female reproductive tract, thereby playing an essential for male fertility. The chain is Potassium channel subfamily U member 1 from Homo sapiens (Human).